A 275-amino-acid chain; its full sequence is Dihydroxyacetone phosphatase (275 aa).

The Nucleophile role is filled by Asp10. Residues Asp10, Asp12, and Asp206 each contribute to the Mg(2+) site. Asp12 (proton donor/acceptor) is an active-site residue.

The protein belongs to the HAD-like hydrolase superfamily. In terms of assembly, homohexamer. Mg(2+) is required as a cofactor.

It carries out the reaction dihydroxyacetone phosphate + H2O = dihydroxyacetone + phosphate. In terms of biological role, catalyzes dephosphorylation of dihydroxyacetone phosphate (DHAP) to produce 1,3-dihydroxyacetone (DHA). Is the main enzyme responsible for DHA production from catabolism of sugars (glucose, fructose, and sucrose) in C.glutamicum. Displays no activity toward nucleoside monophosphates (AMP, CMP, GMP, or UMP). The protein is Dihydroxyacetone phosphatase of Corynebacterium glutamicum (strain R).